Consider the following 66-residue polypeptide: Large ribosomal subunit protein bL33 (66 aa).

It belongs to the bacterial ribosomal protein bL33 family.

The sequence is that of Large ribosomal subunit protein bL33 from Wolbachia pipientis subsp. Culex pipiens (strain wPip).